The following is a 182-amino-acid chain: Adenine phosphoribosyltransferase (182 aa).

The protein belongs to the purine/pyrimidine phosphoribosyltransferase family. Homodimer.

The protein localises to the cytoplasm. It catalyses the reaction AMP + diphosphate = 5-phospho-alpha-D-ribose 1-diphosphate + adenine. It participates in purine metabolism; AMP biosynthesis via salvage pathway; AMP from adenine: step 1/1. In terms of biological role, catalyzes a salvage reaction resulting in the formation of AMP, that is energically less costly than de novo synthesis. This is Adenine phosphoribosyltransferase from Pseudomonas fluorescens (strain Pf0-1).